A 256-amino-acid polypeptide reads, in one-letter code: UPF0246 protein PG_1544 (256 aa).

The protein belongs to the UPF0246 family.

The polypeptide is UPF0246 protein PG_1544 (Porphyromonas gingivalis (strain ATCC BAA-308 / W83)).